Consider the following 393-residue polypeptide: Protein TsgA (393 aa).

The next 12 helical transmembrane spans lie at 11–31 (WISFLSYALTGALVIVTGMVM), 51–71 (FLNAGILISIFLNAWLMEIVP), 78–98 (FGFLLMVLAVAGLMFSHSLAL), 101–121 (TAMFILGVVSGITMSIGTFLI), 140–160 (FFSMAGMIFPMIAAFLLAHSI), 162–182 (WYWVYACIGLVYVAIFILTFG), 206–226 (IGVLFLSVAALCYILGQLGFI), 245–265 (TLVSNFWMSYMVGMWAFSFIL), 273–293 (ILTVLAGLAAILMYVFNTGTP), 297–317 (AWSILALGFFSSAIYTTIITL), 332–352 (FVLTCGTIGTMLTFVVTGPIV), and 361–381 (LLTANGLYAVVFVMCFLLGFV).

It belongs to the major facilitator superfamily. TsgA family.

The protein resides in the cell inner membrane. The sequence is that of Protein TsgA from Shigella boydii serotype 18 (strain CDC 3083-94 / BS512).